A 792-amino-acid chain; its full sequence is LPS-assembly protein LptD (792 aa).

Residues 1 to 22 (MYRVLRLLPLPLSVAISLSALA) form the signal peptide.

The protein belongs to the LptD family. Component of the lipopolysaccharide transport and assembly complex. Interacts with LptE and LptA.

Its subcellular location is the cell outer membrane. Its function is as follows. Together with LptE, is involved in the assembly of lipopolysaccharide (LPS) at the surface of the outer membrane. This is LPS-assembly protein LptD from Xylella fastidiosa (strain Temecula1 / ATCC 700964).